We begin with the raw amino-acid sequence, 298 residues long: MQNRFLESITQLDKPLANALVPLLHDQFCGHIDASQFAGLVKASGKTEQQVLMDLLPIAAALANPPISEFYVGAIAKGSSGDLYMGANLELPGEALFHSVHAEQSAISHAWLSGETEIVDIIVNFSPCGHCRQFMNELVNGSKINIHLPNQETQTLAHYLPYAFGPSDLDVTVPLLCKREQEFNCDSDDPMIIEAIDQMGLSYAPYTNNNAAVVLETNDGATFCGRYAESAAFNPSMQPMQMALSNLIRNNRQYSEIKRAVLVESSVGKITLVGAAMDALHAIAPIELQHMVVEPLLG.

2 consecutive CMP/dCMP-type deaminase domains span residues T47–S167 and D186–G298. N88 to E90 lines the substrate pocket. H101 provides a ligand contact to Zn(2+). The active-site Proton donor is the E103. 2 residues coordinate Zn(2+): C128 and C131.

It belongs to the cytidine and deoxycytidylate deaminase family. As to quaternary structure, homodimer. The cofactor is Zn(2+).

The enzyme catalyses cytidine + H2O + H(+) = uridine + NH4(+). The catalysed reaction is 2'-deoxycytidine + H2O + H(+) = 2'-deoxyuridine + NH4(+). In terms of biological role, this enzyme scavenges exogenous and endogenous cytidine and 2'-deoxycytidine for UMP synthesis. The polypeptide is Cytidine deaminase (Shewanella frigidimarina (strain NCIMB 400)).